A 159-amino-acid chain; its full sequence is ATP synthase subunit delta, mitochondrial (159 aa).

Residues 1 to 23 constitute a mitochondrion transit peptide; that stretch reads MFRLSAARTLAKSVNTVVAKRTY.

The protein belongs to the ATPase epsilon chain family. As to quaternary structure, F-type ATPases have 2 components, CF(1) - the catalytic core - and CF(0) - the membrane proton channel. CF(1) has five subunits: alpha(3), beta(3), gamma(1), delta(1), epsilon(1). CF(0) has three main subunits: a, b and c.

The protein resides in the mitochondrion. It is found in the mitochondrion inner membrane. In terms of biological role, mitochondrial membrane ATP synthase (F(1)F(0) ATP synthase or Complex V) produces ATP from ADP in the presence of a proton gradient across the membrane which is generated by electron transport complexes of the respiratory chain. F-type ATPases consist of two structural domains, F(1) - containing the extramembraneous catalytic core, and F(0) - containing the membrane proton channel, linked together by a central stalk and a peripheral stalk. During catalysis, ATP turnover in the catalytic domain of F(1) is coupled via a rotary mechanism of the central stalk subunits to proton translocation. Part of the complex F(1) domain and of the central stalk which is part of the complex rotary element. Rotation of the central stalk against the surrounding alpha(3)beta(3) subunits leads to hydrolysis of ATP in three separate catalytic sites on the beta subunits. This Kluyveromyces lactis (strain ATCC 8585 / CBS 2359 / DSM 70799 / NBRC 1267 / NRRL Y-1140 / WM37) (Yeast) protein is ATP synthase subunit delta, mitochondrial (ATP16).